An 84-amino-acid chain; its full sequence is Three-finger toxin MALT0070C (84 aa).

An N-terminal signal peptide occupies residues 1–21 (MKTLLLTLVVVTIVCLDLGYT). 4 disulfides stabilise this stretch: Cys24–Cys43, Cys36–Cys60, Cys64–Cys71, and Cys72–Cys77.

The protein belongs to the three-finger toxin family. Short-chain subfamily. Expressed by the venom gland.

The protein resides in the secreted. The chain is Three-finger toxin MALT0070C from Micrurus altirostris (Uruguayan coral snake).